We begin with the raw amino-acid sequence, 368 residues long: Chorismate synthase (368 aa).

Position 46 (Arg46) interacts with NADP(+). Residues 123–125, 240–241, Gly285, 300–304, and Arg326 contribute to the FMN site; these read RSS, NA, and KPTPT.

Belongs to the chorismate synthase family. As to quaternary structure, homotetramer. It depends on FMNH2 as a cofactor.

It catalyses the reaction 5-O-(1-carboxyvinyl)-3-phosphoshikimate = chorismate + phosphate. Its pathway is metabolic intermediate biosynthesis; chorismate biosynthesis; chorismate from D-erythrose 4-phosphate and phosphoenolpyruvate: step 7/7. Its function is as follows. Catalyzes the anti-1,4-elimination of the C-3 phosphate and the C-6 proR hydrogen from 5-enolpyruvylshikimate-3-phosphate (EPSP) to yield chorismate, which is the branch point compound that serves as the starting substrate for the three terminal pathways of aromatic amino acid biosynthesis. This reaction introduces a second double bond into the aromatic ring system. This is Chorismate synthase from Porphyromonas gingivalis (strain ATCC BAA-308 / W83).